The sequence spans 459 residues: Argininosuccinate lyase (459 aa).

The protein belongs to the lyase 1 family. Argininosuccinate lyase subfamily.

It is found in the cytoplasm. The enzyme catalyses 2-(N(omega)-L-arginino)succinate = fumarate + L-arginine. Its pathway is amino-acid biosynthesis; L-arginine biosynthesis; L-arginine from L-ornithine and carbamoyl phosphate: step 3/3. In Desulforudis audaxviator (strain MP104C), this protein is Argininosuccinate lyase.